The chain runs to 58 residues: Small ribosomal subunit protein bS21 (58 aa).

The tract at residues arginine 35–lysine 58 is disordered. Positions valine 43–lysine 58 are enriched in basic residues.

The protein belongs to the bacterial ribosomal protein bS21 family.

In Acetivibrio thermocellus (strain ATCC 27405 / DSM 1237 / JCM 9322 / NBRC 103400 / NCIMB 10682 / NRRL B-4536 / VPI 7372) (Clostridium thermocellum), this protein is Small ribosomal subunit protein bS21.